The primary structure comprises 85 residues: Small ribosomal subunit protein uS17 (85 aa).

This sequence belongs to the universal ribosomal protein uS17 family. Part of the 30S ribosomal subunit.

Its function is as follows. One of the primary rRNA binding proteins, it binds specifically to the 5'-end of 16S ribosomal RNA. The chain is Small ribosomal subunit protein uS17 from Desulforapulum autotrophicum (strain ATCC 43914 / DSM 3382 / VKM B-1955 / HRM2) (Desulfobacterium autotrophicum).